A 619-amino-acid chain; its full sequence is Pentatricopeptide repeat-containing protein At3g22470, mitochondrial (619 aa).

The transit peptide at 1 to 28 (MIQRLIPLNRKASNFTQILEKGTSLLHY) directs the protein to the mitochondrion. PPR repeat units lie at residues 69–103 (TPID…GIEH), 104–138 (DMYT…GYEP), 139–173 (DTIT…KQRP), 174–208 (DLVT…GFQP), 209–243 (DEVT…NIKA), 244–278 (SVVQ…GIKA), 279–313 (DVVT…NIIP), 314–348 (DVVT…GIAP), 349–383 (DTIT…GCEP), 384–418 (DIVT…GLIP), 419–453 (NTIT…GVPP), 454–488 (SVVT…RMTL), 489–523 (GIGI…GVKP), 524–558 (DVVT…GCTP), and 559–593 (DDFT…GFSA).

The protein belongs to the PPR family. P subfamily.

It is found in the mitochondrion. The polypeptide is Pentatricopeptide repeat-containing protein At3g22470, mitochondrial (Arabidopsis thaliana (Mouse-ear cress)).